A 417-amino-acid polypeptide reads, in one-letter code: Chaperone SurA (417 aa).

The N-terminal stretch at 1-12 (MGAALLCSFAHA) is a signal peptide. PpiC domains are found at residues 163–264 (SEEY…KLEE) and 273–372 (RDEV…QVLG).

It is found in the periplasm. It carries out the reaction [protein]-peptidylproline (omega=180) = [protein]-peptidylproline (omega=0). Chaperone involved in the correct folding and assembly of outer membrane proteins. Recognizes specific patterns of aromatic residues and the orientation of their side chains, which are found more frequently in integral outer membrane proteins. May act in both early periplasmic and late outer membrane-associated steps of protein maturation. The chain is Chaperone SurA from Pseudomonas aeruginosa (strain ATCC 15692 / DSM 22644 / CIP 104116 / JCM 14847 / LMG 12228 / 1C / PRS 101 / PAO1).